The following is a 286-amino-acid chain: Beta-lactamase TEM (286 aa).

Residues 1–23 (MSIQHFRVALIPFFAAFCLPVFA) form the signal peptide. Catalysis depends on Ser-68, which acts as the Acyl-ester intermediate. A disulfide bridge links Cys-75 with Cys-121. The Proton acceptor role is filled by Glu-166. 232–234 (KSG) is a binding site for substrate.

It belongs to the class-A beta-lactamase family.

It catalyses the reaction a beta-lactam + H2O = a substituted beta-amino acid. TEM-type are the most prevalent beta-lactamases in enterobacteria; they hydrolyze the beta-lactam bond in susceptible beta-lactam antibiotics, thus conferring resistance to penicillins and cephalosporins. TEM-3 and TEM-4 are capable of hydrolyzing cefotaxime and ceftazidime. TEM-5 is capable of hydrolyzing ceftazidime. TEM-6 is capable of hydrolyzing ceftazidime and aztreonam. TEM-8/CAZ-2, TEM-16/CAZ-7 and TEM-24/CAZ-6 are markedly active against ceftazidime. IRT-4 shows resistance to beta-lactamase inhibitors. This is Beta-lactamase TEM (bla) from Escherichia coli.